A 448-amino-acid polypeptide reads, in one-letter code: Phosphoglucosamine mutase (448 aa).

The active-site Phosphoserine intermediate is serine 100. Residues serine 100, aspartate 240, aspartate 242, and aspartate 244 each coordinate Mg(2+). Phosphoserine is present on serine 100.

It belongs to the phosphohexose mutase family. Mg(2+) serves as cofactor. Post-translationally, activated by phosphorylation.

The enzyme catalyses alpha-D-glucosamine 1-phosphate = D-glucosamine 6-phosphate. Its function is as follows. Catalyzes the conversion of glucosamine-6-phosphate to glucosamine-1-phosphate. This Clostridium beijerinckii (strain ATCC 51743 / NCIMB 8052) (Clostridium acetobutylicum) protein is Phosphoglucosamine mutase.